The primary structure comprises 78 residues: Small ribosomal subunit protein bS18 (78 aa).

The protein belongs to the bacterial ribosomal protein bS18 family. In terms of assembly, part of the 30S ribosomal subunit. Forms a tight heterodimer with protein bS6.

Binds as a heterodimer with protein bS6 to the central domain of the 16S rRNA, where it helps stabilize the platform of the 30S subunit. The polypeptide is Small ribosomal subunit protein bS18 (Lactobacillus acidophilus (strain ATCC 700396 / NCK56 / N2 / NCFM)).